A 422-amino-acid polypeptide reads, in one-letter code: Acylglycerol kinase, mitochondrial (422 aa).

Position 6 is an N6-acetyllysine (Lys6). The segment at 15-31 (TTAGLCLLTWGGHWLYG) is hydrophobic. Residues 58 to 199 (AQVKKATVFL…LDVLQIKGEK (142 aa)) enclose the DAGKc domain. The segment at 249 to 271 (QASISYTGPTERPPNEPEETPVQ) is disordered.

This sequence belongs to the AGK family. Component of the TIM22 complex, which core is composed of TIMM22, associated with TIMM10 (TIMM10A and/or TIMM10B), TIMM9, AGK and TIMM29. Interacts with SMIM26. The cofactor is Mg(2+). As to expression, highly expressed in muscle, heart, kidney and brain.

Its subcellular location is the mitochondrion inner membrane. It localises to the mitochondrion intermembrane space. It catalyses the reaction a monoacylglycerol + ATP = a monoacyl-sn-glycero-3-phosphate + ADP + H(+). It carries out the reaction a 1,2-diacyl-sn-glycerol + ATP = a 1,2-diacyl-sn-glycero-3-phosphate + ADP + H(+). The catalysed reaction is an N-acylsphing-4-enine + ATP = an N-acylsphing-4-enine 1-phosphate + ADP + H(+). The enzyme catalyses 1-(9Z-octadecenoyl)-sn-glycerol + ATP = 1-(9Z-octadecenoyl)-sn-glycero-3-phosphate + ADP + H(+). It catalyses the reaction 1,2-di-(9Z-octadecenoyl)-sn-glycerol + ATP = 1,2-di-(9Z-octadecenoyl)-sn-glycero-3-phosphate + ADP + H(+). It carries out the reaction a 1-acyl-sn-glycerol + ATP = a 1-acyl-sn-glycero-3-phosphate + ADP + H(+). The catalysed reaction is 1-hexadecanoyl-sn-glycerol + ATP = 1-hexadecanoyl-sn-glycero-3-phosphate + ADP + H(+). The enzyme catalyses a 2-acylglycerol + ATP = a 2-acyl-sn-glycerol 3-phosphate + ADP + H(+). It catalyses the reaction 2-(5Z,8Z,11Z,14Z-eicosatetraenoyl)-glycerol + ATP = 2-(5Z,8Z,11Z,14Z-eicosatetraenoyl)-sn-glycero-3-phosphate + ADP + H(+). It carries out the reaction 1-(5Z,8Z,11Z,14Z-eicosatetraenoyl)-sn-glycerol + ATP = 1-(5Z,8Z,11Z,14Z-eicosatetraenoyl)-sn-glycero-3-phosphate + ADP + H(+). The catalysed reaction is N-(hexanoyl)sphing-4-enine + ATP = N-hexanoylsphing-4-enine 1-phosphate + ADP + H(+). It participates in lipid metabolism; glycerolipid metabolism. Lipid kinase that can phosphorylate both monoacylglycerol and diacylglycerol to form lysophosphatidic acid (LPA) and phosphatidic acid (PA), respectively. Does not phosphorylate sphingosine. Phosphorylates ceramide. Phosphorylates 1,2-dioleoylglycerol more rapidly than 2,3-dioleoylglycerol. Independently of its lipid kinase activity, acts as a component of the TIM22 complex. The TIM22 complex mediates the import and insertion of multi-pass transmembrane proteins into the mitochondrial inner membrane by forming a twin-pore translocase that uses the membrane potential as the external driving force. In the TIM22 complex, required for the import of a subset of metabolite carriers into mitochondria, such as ANT1/SLC25A4 and SLC25A24, while it is not required for the import of TIMM23. Overexpression increases the formation and secretion of LPA, resulting in transactivation of EGFR and activation of the downstream MAPK signaling pathway, leading to increased cell growth. The sequence is that of Acylglycerol kinase, mitochondrial from Homo sapiens (Human).